The sequence spans 123 residues: Large ribosomal subunit protein uL14 (123 aa).

This sequence belongs to the universal ribosomal protein uL14 family. As to quaternary structure, part of the 50S ribosomal subunit. Forms a cluster with proteins L3 and L19. In the 70S ribosome, L14 and L19 interact and together make contacts with the 16S rRNA in bridges B5 and B8.

Its function is as follows. Binds to 23S rRNA. Forms part of two intersubunit bridges in the 70S ribosome. The sequence is that of Large ribosomal subunit protein uL14 from Cronobacter sakazakii (strain ATCC BAA-894) (Enterobacter sakazakii).